We begin with the raw amino-acid sequence, 418 residues long: Tyrosine--tRNA ligase (418 aa).

Position 38 (Tyr-38) interacts with L-tyrosine. The 'HIGH' region signature appears at Cys-43–Ser-52. Tyr-175 and Gln-179 together coordinate L-tyrosine. Residues Lys-235 to Thr-239 carry the 'KMSKS' region motif. Lys-238 serves as a coordination point for ATP. The S4 RNA-binding domain occupies Leu-348–Val-413.

The protein belongs to the class-I aminoacyl-tRNA synthetase family. TyrS type 1 subfamily. As to quaternary structure, homodimer.

Its subcellular location is the cytoplasm. The enzyme catalyses tRNA(Tyr) + L-tyrosine + ATP = L-tyrosyl-tRNA(Tyr) + AMP + diphosphate + H(+). In terms of biological role, catalyzes the attachment of tyrosine to tRNA(Tyr) in a two-step reaction: tyrosine is first activated by ATP to form Tyr-AMP and then transferred to the acceptor end of tRNA(Tyr). This is Tyrosine--tRNA ligase from Ehrlichia ruminantium (strain Welgevonden).